The sequence spans 353 residues: C-X-C chemokine receptor type 4 (353 aa).

An important for chemokine binding and signaling region spans residues 1–22 (MDGFRIYPSDNYTEDDLGSGDY). At 1–39 (MDGFRIYPSDNYTEDDLGSGDYDSMKEPCFREENAHFNR) the chain is on the extracellular side. Residue Tyr-7 is modified to Sulfotyrosine. A glycan (N-linked (GlcNAc...) asparagine) is linked at Asn-11. Sulfotyrosine is present on Tyr-12. Ser-19 carries O-linked (Xyl...) (chondroitin sulfate) serine glycosylation. Tyr-22 carries the post-translational modification Sulfotyrosine. 2 cysteine pairs are disulfide-bonded: Cys-29–Cys-275 and Cys-110–Cys-187. A helical transmembrane segment spans residues 40-64 (IFLPTVYSIIFLTGIVGNGLVILVM). Over 65-78 (GYQKKLRSMTDKYR) the chain is Cytoplasmic. The chain crosses the membrane as a helical span at residues 79-100 (LHLSVADLLFVLTLPFWAVDAV). The interval 95-98 (WAVD) is chemokine binding. Topologically, residues 101-111 (ANWYFGKFLCK) are extracellular. A helical membrane pass occupies residues 112 to 131 (AVHVIYTVNLYSSVLILAFI). Residues 114–118 (HVIYT) are chemokine binding. The Cytoplasmic portion of the chain corresponds to 132-155 (SLDRYLAIVHATNSQRPRKLLAEK). An Important for signaling motif is present at residues 134–136 (DRY). The tract at residues 136 to 148 (YLAIVHATNSQRP) is involved in dimerization; when bound to chemokine. Residues 156 to 175 (VVYVGVWIPALLLTIPDFIF) traverse the membrane as a helical segment. The Extracellular segment spans residues 176–196 (ANVREADGRYICDRFYPSDSW). The interval 187 to 191 (CDRFY) is chemokine binding, important for signaling. An involved in dimerization region spans residues 192–211 (PSDSWLVVFQFQHIMVGLIL). Residues 197–217 (LVVFQFQHIMVGLILPGIVIL) traverse the membrane as a helical segment. Residues 218–242 (SCYCIIISKLSHSKGYQKRKALKTT) lie on the Cytoplasmic side of the membrane. Residues 243 to 262 (VILILAFFACWLPYYIGISI) form a helical membrane-spanning segment. Topologically, residues 263–283 (DSFILLEIIKQGCEFESTVHK) are extracellular. Positions 267-269 (LLE) are involved in dimerization. The helical transmembrane segment at 284–303 (WISITEALAFFHCCLNPILY) threads the bilayer. At 304-353 (AFLGAKFKTSAQHALTSVSRGSSLKILSKGKRGGHSSVSTESESSSFHSS) the chain is on the cytoplasmic side. 2 positions are modified to phosphoserine: Ser-320 and Ser-322. Phosphoserine; by PKC and GRK6 is present on residues Ser-325 and Ser-326. The tract at residues 330–353 (LSKGKRGGHSSVSTESESSSFHSS) is disordered. Ser-331 is modified (phosphoserine; by GRK6). Residue Lys-332 forms a Glycyl lysine isopeptide (Lys-Gly) (interchain with G-Cter in ubiquitin) linkage. A compositionally biased stretch (low complexity) spans 338–353 (HSSVSTESESSSFHSS). Ser-340 carries the phosphoserine; by GRK6 modification. Residues Ser-349 and Ser-352 each carry the phosphoserine modification.

Belongs to the G-protein coupled receptor 1 family. In terms of assembly, monomer. Can form homodimers. Interacts with CD164. Interacts with ARRB2; the interaction is dependent on the C-terminal phosphorylation of CXCR4 and allows activation of MAPK1 and MAPK3. Interacts with ARR3; the interaction is dependent on the C-terminal phosphorylation of CXCR4 and modulates calcium mobilization. Interacts with RNF113A; the interaction, enhanced by CXCL12, promotes CXCR4 ubiquitination and subsequent degradation. Interacts (via the cytoplasmic C-terminal) with ITCH (via the WW domains I and II); the interaction, enhanced by CXCL12, promotes CXCR4 ubiquitination and leads to its degradation. Interacts with extracellular ubiquitin. Interacts with DBN1; this interaction is enhanced by antigenic stimulation. Following LPS binding, may form a complex with GDF5, HSP90AA1 and HSPA8. In terms of processing, phosphorylated on agonist stimulation. Rapidly phosphorylated on serine and threonine residues in the C-terminal. Phosphorylation at Ser-325 and Ser-326 leads to recruitment of ITCH, ubiquitination and protein degradation. Post-translationally, ubiquitinated after ligand binding, leading to its degradation. Ubiquitinated by ITCH at the cell membrane on agonist stimulation. The ubiquitin-dependent mechanism, endosomal sorting complex required for transport (ESCRT), then targets CXCR4 for lysosomal degradation. This process is dependent also on prior Ser-/Thr-phosphorylation in the C-terminal of CXCR4. Also binding of ARRB1 to STAM negatively regulates CXCR4 sorting to lysosomes though modulating ubiquitination of SFR5S. Sulfation is required for efficient binding of CXCL12/SDF-1alpha and promotes its dimerization. In terms of processing, O- and N-glycosylated. N-glycosylation can mask coreceptor function. The O-glycosylation chondroitin sulfate attachment does not affect interaction with CXCL12/SDF-1alpha nor its coreceptor activity.

It is found in the cell membrane. The protein resides in the cell junction. It localises to the early endosome. The protein localises to the late endosome. Its subcellular location is the lysosome. Receptor for the C-X-C chemokine CXCL12/SDF-1 that transduces a signal by increasing intracellular calcium ion levels and enhancing MAPK1/MAPK3 activation. Involved in the AKT signaling cascade. Plays a role in regulation of cell migration, e.g. during wound healing. Acts as a receptor for extracellular ubiquitin; leading to enhanced intracellular calcium ions and reduced cellular cAMP levels. Binds bacterial lipopolysaccharide (LPS) et mediates LPS-induced inflammatory response, including TNF secretion by monocytes. Involved in hematopoiesis and in cardiac ventricular septum formation. Also plays an essential role in vascularization of the gastrointestinal tract, probably by regulating vascular branching and/or remodeling processes in endothelial cells. Involved in cerebellar development. In the CNS, could mediate hippocampal-neuron survival. The protein is C-X-C chemokine receptor type 4 (CXCR4) of Felis catus (Cat).